Here is a 186-residue protein sequence, read N- to C-terminus: Intraflagellar transport protein 27 homolog (186 aa).

Residues 12 to 19 (GDPAVGKT), 64 to 68 (DSAGK), and 123 to 126 (TKTD) contribute to the GTP site.

Belongs to the small GTPase superfamily. Rab family. As to quaternary structure, component of the IFT complex B, at least composed of IFT20, IFT22, IFT25, IFT27, IFT46, IFT52, TRAF3IP1/IFT54, IFT57, IFT74, IFT80, IFT81, and IFT88. Interacts with IFT25. Interacts with IFT70B. Interacts with RABL2/RABL2A; binding is equal in the presence of GTP or GDP. Interacts with IFT88. Interacts with ARL6; recognizes and binds with the GTP-free form of ARL6. In terms of tissue distribution, expressed predominantly in the testis (at protein level). Co-localizes with RABL2/RABL2A in the midpiece of elongated spermatids within the testis (at protein level).

Its subcellular location is the cell projection. It localises to the cilium. It is found in the cytoplasm. The protein resides in the flagellum. Its function is as follows. Small GTPase-like component of the intraflagellar transport (IFT) complex B that promotes the exit of the BBSome complex from cilia via its interaction with ARL6. Not involved in entry of the BBSome complex into cilium. Prevents aggregation of GTP-free ARL6. Required for hedgehog signaling. Forms a subcomplex within the IFT complex B with IFT25. Its role in intraflagellar transport is mainly seen in tissues rich in ciliated cells such as kidney and testis. Essential for male fertility, spermiogenesis and sperm flagella formation. Plays a role in the early development of the kidney. May be involved in the regulation of ureteric bud initiation. The sequence is that of Intraflagellar transport protein 27 homolog (Ift27) from Mus musculus (Mouse).